The chain runs to 380 residues: Queuine tRNA-ribosyltransferase (380 aa).

The active-site Proton acceptor is Asp95. Substrate is bound by residues 95–99 (DSGGF), Asp149, Gln192, and Gly219. Positions 250 to 256 (GVGSPDA) are RNA binding. Asp269 serves as the catalytic Nucleophile. The interval 274–278 (TRIAR) is RNA binding; important for wobble base 34 recognition. Zn(2+)-binding residues include Cys307, Cys309, Cys312, and His338.

It belongs to the queuine tRNA-ribosyltransferase family. In terms of assembly, homodimer. Within each dimer, one monomer is responsible for RNA recognition and catalysis, while the other monomer binds to the replacement base PreQ1. Zn(2+) serves as cofactor.

The enzyme catalyses 7-aminomethyl-7-carbaguanine + guanosine(34) in tRNA = 7-aminomethyl-7-carbaguanosine(34) in tRNA + guanine. It functions in the pathway tRNA modification; tRNA-queuosine biosynthesis. In terms of biological role, catalyzes the base-exchange of a guanine (G) residue with the queuine precursor 7-aminomethyl-7-deazaguanine (PreQ1) at position 34 (anticodon wobble position) in tRNAs with GU(N) anticodons (tRNA-Asp, -Asn, -His and -Tyr). Catalysis occurs through a double-displacement mechanism. The nucleophile active site attacks the C1' of nucleotide 34 to detach the guanine base from the RNA, forming a covalent enzyme-RNA intermediate. The proton acceptor active site deprotonates the incoming PreQ1, allowing a nucleophilic attack on the C1' of the ribose to form the product. After dissociation, two additional enzymatic reactions on the tRNA convert PreQ1 to queuine (Q), resulting in the hypermodified nucleoside queuosine (7-(((4,5-cis-dihydroxy-2-cyclopenten-1-yl)amino)methyl)-7-deazaguanosine). The polypeptide is Queuine tRNA-ribosyltransferase (Latilactobacillus sakei subsp. sakei (strain 23K) (Lactobacillus sakei subsp. sakei)).